Reading from the N-terminus, the 713-residue chain is Nucleoporin NUP82 (713 aa).

An interaction with NUP116 region spans residues 1–409; it reads MSQSSRLSAL…SDLNPLAGLK (409 aa). Positions 463–713 are interaction with NSP1 and NUP159; it reads TSISTEKSDT…VSQEFTTKTQ (251 aa). A coiled-coil region spans residues 582 to 713; the sequence is EAQNKKWDAQ…VSQEFTTKTQ (132 aa). The short motif at 607 to 623 is the Bipartite nuclear localization signal element; it reads KKLSQIAESNKFKEKKI.

In terms of assembly, component of the nuclear pore complex (NPC). NPC constitutes the exclusive means of nucleocytoplasmic transport. NPCs allow the passive diffusion of ions and small molecules and the active, nuclear transport receptor-mediated bidirectional transport of macromolecules such as proteins, RNAs, ribonucleoparticles (RNPs), and ribosomal subunits across the nuclear envelope. Due to its 8-fold rotational symmetry, all subunits are present with 8 copies or multiples thereof. NUP82 is part of the NUP82 subcomplex. This subcomplex is the base for interactions with NUP116 and GLE2, with NUP42 and GLE1 and with DYN2.

Its subcellular location is the nucleus. It localises to the nuclear pore complex. The protein resides in the nucleus membrane. Functions as a component of the nuclear pore complex (NPC). NPC components, collectively referred to as nucleoporins (NUPs), can play the role of both NPC structural components and of docking or interaction partners for transiently associated nuclear transport factors. It is specifically involved as part of the NUP82-NUP159-NSP1 subcomplex in nuclear mRNA and pre-ribosome export by acting as a linker tethering nucleoporins that are directly involved in nuclear transport to the NPC via its coiled-coil domain. The protein is Nucleoporin NUP82 (NUP82) of Saccharomyces cerevisiae (strain ATCC 204508 / S288c) (Baker's yeast).